A 507-amino-acid polypeptide reads, in one-letter code: RNA-splicing ligase RtcB homolog (507 aa).

Positions 121, 124, 229, 261, and 355 each coordinate Mn(2+). Position 228 to 232 (228 to 232 (NHYAE)) interacts with GMP. Residues 355-356 (HN), 404-407 (GGTM), Ser-411, 430-433 (HGAG), and Lys-506 each bind GMP. Catalysis depends on His-430, which acts as the GMP-histidine intermediate.

The protein belongs to the RtcB family. Catalytic component of the tRNA-splicing ligase complex. Requires Mn(2+) as cofactor.

It carries out the reaction a 3'-end 3'-phospho-ribonucleotide-RNA + a 5'-end dephospho-ribonucleoside-RNA + GTP = a ribonucleotidyl-ribonucleotide-RNA + GMP + diphosphate. The catalysed reaction is a 3'-end 2',3'-cyclophospho-ribonucleotide-RNA + a 5'-end dephospho-ribonucleoside-RNA + GTP + H2O = a ribonucleotidyl-ribonucleotide-RNA + GMP + diphosphate + H(+). In terms of biological role, catalytic subunit of the tRNA-splicing ligase complex that acts by directly joining spliced tRNA halves to mature-sized tRNAs by incorporating the precursor-derived splice junction phosphate into the mature tRNA as a canonical 3',5'-phosphodiester. May act as an RNA ligase with broad substrate specificity, and may function toward other RNAs. The sequence is that of RNA-splicing ligase RtcB homolog from Branchiostoma floridae (Florida lancelet).